A 701-amino-acid polypeptide reads, in one-letter code: F-box/LRR-repeat protein 17 (701 aa).

Disordered regions lie at residues 73–93 (SAGLEEEPPLSPPPPPPRDGA), 227–250 (GGGGPAGGGASPPRPPDAGCCQAP), and 279–321 (VRAG…IPDI). Residues 81–90 (PLSPPPPPPR) are compositionally biased toward pro residues. Over residues 227–236 (GGGGPAGGGA) the composition is skewed to gly residues. Residues 285–294 (APSSAQQQPE) show a composition bias toward polar residues. The F-box domain maps to 318–365 (IPDINQLPPSILLKIFSNLSLNERCLSASLVCKYWRDLCLDFQFWKQL).

The protein belongs to the FBXL17 family. Part of the SCF (SKP1-CUL1-F-box) E3 ubiquitin-protein ligase complex SCF(FBXL17) composed of CUL1, SKP1, RBX1 and FBXL17. Interacts with BTB domain-containing proteins such as KLHL12, BCL6 and BACH1; specifically recognizes and binds a conserved degron of non-consecutive residues present at the interface of BTB dimers of aberrant composition. Interacts with SUFU. Interacts with PRMT1.

It is found in the cytoplasm. It localises to the nucleus. Functionally, substrate-recognition component of the SCF(FBXL17) E3 ubiquitin ligase complex, a key component of a quality control pathway required to ensure functional dimerization of BTB domain-containing proteins (dimerization quality control, DQC). FBXL17 specifically recognizes and binds a conserved degron of non-consecutive residues present at the interface of BTB dimers of aberrant composition: aberrant BTB dimer are then ubiquitinated by the SCF(FBXL17) complex and degraded by the proteasome. The ability of the SCF(FBXL17) complex to eliminate compromised BTB dimers is required for the differentiation and survival of neural crest and neuronal cells. The SCF(FBXL17) complex mediates ubiquitination and degradation of BACH1. The SCF(FBXL17) complex is also involved in the regulation of the hedgehog/smoothened (Hh) signaling pathway by mediating the ubiquitination and degradation of SUFU, allowing the release of GLI1 from SUFU for proper Hh signal transduction. The SCF(FBXL17) complex mediates ubiquitination and degradation of PRMT1. In Mus musculus (Mouse), this protein is F-box/LRR-repeat protein 17.